The primary structure comprises 501 residues: Dipeptide and tripeptide permease A (501 aa).

Over 1 to 34 the chain is Cytoplasmic; the sequence is MSTANNKPTESVSLNAFKQPKSFYLIFSIELWER. A helical transmembrane segment spans residues 35 to 55; the sequence is FGYYGLQGIMAVYLVKQLGMS. Over 56-59 the chain is Periplasmic; it reads EADS. A helical membrane pass occupies residues 60–80; it reads ITLFSSFSALVYGLVAIGGWL. Residues 81–89 are Cytoplasmic-facing; the sequence is GDKVLGTKR. A helical transmembrane segment spans residues 90–110; it reads VIMLGAIVLAIGYGLVAWSGH. Residue Asp111 is a topological domain, periplasmic. A helical membrane pass occupies residues 112 to 132; that stretch reads VAIVYMGMATIAVGNGLFKAN. Residues 133 to 153 lie on the Cytoplasmic side of the membrane; that stretch reads PSSLLSTCYAKDDPRLDGAFT. A helical transmembrane segment spans residues 154-174; the sequence is MYYMSINIGSFFSMLATPWLA. At 175–178 the chain is on the periplasmic side; the sequence is AKFG. A helical membrane pass occupies residues 179–199; sequence WSVAFALSFVGMLITVVNFLF. Residues 200 to 217 are Cytoplasmic-facing; it reads CRSWVKDYGSKPDFEAVH. Residues 218–238 traverse the membrane as a helical segment; that stretch reads FGKLLATIAGVIVLIAIATWL. At 239-246 the chain is on the periplasmic side; the sequence is LHNQGIAR. A helical membrane pass occupies residues 247–267; it reads MVLGVIALGIVIIFGKEAFAM. Residues 268 to 274 are Cytoplasmic-facing; that stretch reads QGAARRK. The helical transmembrane segment at 275–295 threads the bilayer; sequence MIVAFILMLEAIIFFVLYSQM. The Periplasmic segment spans residues 296 to 320; that stretch reads PTSLNFFAIRNVEHTILGIAVEPEQ. A helical transmembrane segment spans residues 321–341; the sequence is YQALNPFWIIIGSPILAAIYN. At 342 to 352 the chain is on the cytoplasmic side; that stretch reads KMGDTLPMPTK. The helical transmembrane segment at 353–373 threads the bilayer; sequence FAIGMVLCSGAFLVLPLGAKF. Residues 374–383 lie on the Periplasmic side of the membrane; that stretch reads ATDAGIVSVN. A helical membrane pass occupies residues 384–404; that stretch reads WLILSYGLQSIGELMISGLGL. The Cytoplasmic segment spans residues 405-414; sequence AMVAQLVPQR. Residues 415-435 traverse the membrane as a helical segment; the sequence is LMGFIMGSWFLTTAGANLIGG. Residues 436 to 459 lie on the Periplasmic side of the membrane; the sequence is YVAGMMAVPENVTDPLMSLEVYGR. The helical transmembrane segment at 460-480 threads the bilayer; it reads VFLQIGVATAVIAALMLITAP. Topologically, residues 481 to 501 are cytoplasmic; it reads KLNRMTQDDEENAKAAKTATA.

It belongs to the major facilitator superfamily. Proton-dependent oligopeptide transporter (POT/PTR) (TC 2.A.17) family. DtpA subfamily.

It is found in the cell inner membrane. Its function is as follows. Proton-dependent permease that transports di- and tripeptides. This Citrobacter koseri (strain ATCC BAA-895 / CDC 4225-83 / SGSC4696) protein is Dipeptide and tripeptide permease A.